Reading from the N-terminus, the 961-residue chain is RNA polymerase II subunit A C-terminal domain phosphatase (961 aa).

Methionine 1 carries the N-acetylmethionine modification. The region spanning 178-344 is the FCP1 homology domain; sequence HRNRKLVLMV…SRESQTRKKV (167 aa). A disordered region spans residues 328–589; that stretch reads DMNAPPGSRE…EEEDTDEDDH (262 aa). Positions 394-406 are enriched in basic and acidic residues; it reads DSPRPGKPDERDI. Phosphoserine is present on serine 395. A compositionally biased stretch (acidic residues) spans 450–462; that stretch reads LDFDLSSDSESSS. Residues 463–475 show a composition bias toward low complexity; that stretch reads ESEGTKSSSSASD. The segment covering 575–588 has biased composition (acidic residues); that stretch reads SMEEEEEEDTDEDD. A BRCT domain is found at 629–728; the sequence is LKSKVLADVA…DKVEEQLFPL (100 aa). Residues serine 674 and serine 740 each carry the phosphoserine modification. Disordered regions lie at residues 730–752 and 780–949; these read DDHT…GVPP and KLIR…ADEM. Lysine 780 bears the N6-acetyllysine mark. Residues 793–803 show a composition bias toward polar residues; sequence SSSLPIRQEPS. Serine 839 carries the post-translational modification Phosphoserine. Positions 850–859 are enriched in basic and acidic residues; that stretch reads CKEDLESMDK. Composition is skewed to acidic residues over residues 860–873 and 937–947; these read EVDD…DDSD and NEDEGSSSEAD. Residues serine 869 and serine 872 each carry the phosphoserine modification.

Homodimer. Interacts with GTF2F1. Interacts with WDR77, SNRPB and SNRNP70. Post-translationally, phosphorylated. In the presence of TFIIF, the phosphorylated form has an increased CTD phosphatase activity. The phosphorylation is required for the physical interaction with GTF2F1. As to expression, ubiquitously expressed.

It is found in the nucleus. Its subcellular location is the cytoplasm. The protein localises to the cytoskeleton. It localises to the microtubule organizing center. The protein resides in the centrosome. It is found in the spindle pole. Its subcellular location is the midbody. The catalysed reaction is O-phospho-L-seryl-[protein] + H2O = L-seryl-[protein] + phosphate. It catalyses the reaction O-phospho-L-threonyl-[protein] + H2O = L-threonyl-[protein] + phosphate. Functionally, processively dephosphorylates 'Ser-2' and 'Ser-5' of the heptad repeats YSPTSPS in the C-terminal domain of the largest RNA polymerase II subunit. This promotes the activity of RNA polymerase II. Plays a role in the exit from mitosis by dephosphorylating crucial mitotic substrates (USP44, CDC20 and WEE1) that are required for M-phase-promoting factor (MPF)/CDK1 inactivation. The protein is RNA polymerase II subunit A C-terminal domain phosphatase (CTDP1) of Homo sapiens (Human).